The following is a 462-amino-acid chain: Centrosomal protein of 55 kDa (462 aa).

The segment covering 1-11 has biased composition (basic and acidic residues); sequence MSSRSPKDLIK. The tract at residues 1-26 is disordered; sequence MSSRSPKDLIKSKWGSRPSSSKSDTA. The segment covering 12–23 has biased composition (low complexity); that stretch reads SKWGSRPSSSKS. Residues 50 to 400 are a coiled coil; the sequence is KMAEKGRSRL…TQLESLKQLH (351 aa). Phosphoserine is present on residues Ser-96 and Ser-99. Residues 157–235 form an interaction with TSG101 region; that stretch reads ANCFNSSMNS…EGYLQVEKQK (79 aa). The tract at residues 160–214 is interaction with PDCD6IP; the sequence is FNSSMNSIHEKEMQLKDALEKNQQWLVYDQQREAYVKGLLAKIFELEKRTETAAA. A required for localization to the interphase centrosome and to the midbody during cytokinesis region spans residues 354–462; it reads QMQACTLDFE…LLVHVEYCMK (109 aa). A disordered region spans residues 410-430; sequence PLQREPESRVKATSPKSPSAA. Ser-423, Ser-426, and Ser-428 each carry phosphoserine. Position 434 is a phosphoserine; by PLK1 (Ser-434).

In terms of assembly, homodimer. Interacts (phosphorylated on Ser-423 and Ser-426) with PLK1; the interaction is indirect via the MTMR3:MTMR4 heterooligomer, occurs during early mitosis, regulates the phosphorylation of CEP55 by PLK1 and its recruitment to the midbody where it can mediate cell abscission. Interacts with AKAP9/CG-NAP; the interaction occurs in interphase and is lost upon mitotic entry. Interacts with PCNT/Kendrin; the interaction occurs in interphase and is lost upon mitotic entry. Directly interacts with PDCD6IP; this interaction is required for PDCD6IP targeting to the midbody; CEP55 binds PDCD6IP in a 2:1 stoichiometry; PDCD6IP competes with TSG101 for the same binding site. Interacts with TSG101; TSG101 competes with PDCD6IP for the same binding site; interaction is required for cytokinesis. Interacts with MVB12A, VPS37B, VPS37C and VPS28. There is a hierachy of phosphorylation, where both Ser-423 and Ser-426 are phosphorylated at the onset of mitosis, prior to Ser-434. Phosphorylation at Ser-423 and Ser-426 is required for dissociation from the centrosome at the G2/M boundary. Phosphorylation at the 3 sites, Ser-423, Ser-426 and Ser-434, is required for protein function at the final stages of cell division to complete cytokinesis successfully.

The protein localises to the cytoplasm. Its subcellular location is the cytoskeleton. It localises to the microtubule organizing center. It is found in the centrosome. The protein resides in the centriole. The protein localises to the cleavage furrow. Its subcellular location is the midbody. It localises to the midbody ring. Plays a role in mitotic exit and cytokinesis. Recruits PDCD6IP and TSG101 to midbody during cytokinesis. Required for successful completion of cytokinesis. Not required for microtubule nucleation. Plays a role in the development of the brain and kidney. This is Centrosomal protein of 55 kDa from Mus musculus (Mouse).